The primary structure comprises 122 residues: Large ribosomal subunit protein uL14 (122 aa).

The protein belongs to the universal ribosomal protein uL14 family. As to quaternary structure, part of the 50S ribosomal subunit. Forms a cluster with proteins L3 and L19. In the 70S ribosome, L14 and L19 interact and together make contacts with the 16S rRNA in bridges B5 and B8.

Binds to 23S rRNA. Forms part of two intersubunit bridges in the 70S ribosome. This Marinomonas sp. (strain MWYL1) protein is Large ribosomal subunit protein uL14.